Reading from the N-terminus, the 269-residue chain is Putative aga operon transcriptional repressor (269 aa).

An HTH deoR-type domain is found at 15 to 70; that stretch reads TSERREQIIQRLRQQGSVQVNDLSALYGVSTVTIRNDLAFLEKQGIAVRAYGGALI. Residues 32–51 constitute a DNA-binding region (H-T-H motif); sequence VQVNDLSALYGVSTVTIRND.

Probable repressor for the aga operon for N-acetyl galactosamine transport and metabolism. This chain is Putative aga operon transcriptional repressor (agaR), found in Escherichia coli O157:H7.